A 458-amino-acid polypeptide reads, in one-letter code: Adenylosuccinate synthetase (458 aa).

GTP contacts are provided by residues 17–23 (GDEGKGK) and 45–47 (GHT). The active-site Proton acceptor is Asp-18. Residues Asp-18 and Gly-45 each contribute to the Mg(2+) site. Residues 18 to 21 (DEGK), 43 to 46 (NAGH), Thr-137, Arg-151, Gln-247, Thr-262, and Arg-330 contribute to the IMP site. His-46 (proton donor) is an active-site residue. Residue 326 to 332 (VTTGRSR) coordinates substrate. Residues Arg-332, 358-360 (KLD), and 440-442 (STS) contribute to the GTP site.

This sequence belongs to the adenylosuccinate synthetase family. Homodimer. It depends on Mg(2+) as a cofactor.

The protein resides in the cytoplasm. The enzyme catalyses IMP + L-aspartate + GTP = N(6)-(1,2-dicarboxyethyl)-AMP + GDP + phosphate + 2 H(+). The protein operates within purine metabolism; AMP biosynthesis via de novo pathway; AMP from IMP: step 1/2. Functionally, plays an important role in the de novo pathway of purine nucleotide biosynthesis. Catalyzes the first committed step in the biosynthesis of AMP from IMP. This is Adenylosuccinate synthetase from Acidovorax ebreus (strain TPSY) (Diaphorobacter sp. (strain TPSY)).